The chain runs to 244 residues: Lymphotoxin-beta (244 aa).

At 1–18 (MGALGLEGRGGRLQGRGS) the chain is on the cytoplasmic side. The chain crosses the membrane as a helical; Signal-anchor for type II membrane protein span at residues 19 to 48 (LLLAVAGATSLVTLLLAVPITVLAVLALVP). Residues 49 to 244 (QDQGGLVTET…KTFFGAVMVG (196 aa)) are Extracellular-facing. One can recognise a THD domain in the interval 88–243 (PAAHLIGAPL…GKTFFGAVMV (156 aa)). Asn222 carries an N-linked (GlcNAc...) asparagine glycan.

The protein belongs to the tumor necrosis factor family. Heterotrimer of either two LTB and one LTA subunits or (less prevalent) one LTB and two LTA subunits. In terms of tissue distribution, spleen and thymus.

It is found in the membrane. Its function is as follows. Cytokine that binds to LTBR/TNFRSF3. May play a specific role in immune response regulation. Provides the membrane anchor for the attachment of the heterotrimeric complex to the cell surface. Isoform 2 is probably non-functional. This Homo sapiens (Human) protein is Lymphotoxin-beta (LTB).